We begin with the raw amino-acid sequence, 1291 residues long: Vacuolating cytotoxin autotransporter (1291 aa).

A signal peptide spans Met-1–Ala-33. The disordered stretch occupies residues Pro-326–Glu-374. 2 stretches are compositionally biased toward polar residues: residues Lys-338–Ala-347 and Ser-354–Glu-374. The 274-residue stretch at Lys-1018–Phe-1291 folds into the Autotransporter domain.

Its subcellular location is the periplasm. The protein resides in the secreted. It localises to the cell surface. The protein localises to the cell outer membrane. Induces vacuolation of eukaryotic cells. Causes ulceration and gastric lesions. The protein is Vacuolating cytotoxin autotransporter (vacA) of Helicobacter pylori (Campylobacter pylori).